Here is a 179-residue protein sequence, read N- to C-terminus: Large ribosomal subunit protein uL5 (179 aa).

It belongs to the universal ribosomal protein uL5 family. Part of the 50S ribosomal subunit; part of the 5S rRNA/L5/L18/L25 subcomplex. Contacts the 5S rRNA and the P site tRNA. Forms a bridge to the 30S subunit in the 70S ribosome.

In terms of biological role, this is one of the proteins that bind and probably mediate the attachment of the 5S RNA into the large ribosomal subunit, where it forms part of the central protuberance. In the 70S ribosome it contacts protein S13 of the 30S subunit (bridge B1b), connecting the 2 subunits; this bridge is implicated in subunit movement. Contacts the P site tRNA; the 5S rRNA and some of its associated proteins might help stabilize positioning of ribosome-bound tRNAs. This is Large ribosomal subunit protein uL5 from Francisella tularensis subsp. tularensis (strain SCHU S4 / Schu 4).